Reading from the N-terminus, the 402-residue chain is Zinc finger protein 809 (402 aa).

The KRAB domain maps to 4–75; the sequence is VSFEDVAVDF…AEASSRSLPG (72 aa). Residues 118 to 139 are disordered; that stretch reads QEVSKGTTSRHRRAPVKSLCRK. Over residues 125–139 the composition is skewed to basic residues; the sequence is TSRHRRAPVKSLCRK. C2H2-type zinc fingers lie at residues 155 to 178, 184 to 206, 213 to 235, 241 to 263, 269 to 291, 297 to 319, and 325 to 347; these read YECKDCEKVFCNNSTLIKHYRRTH, YECDECSKMYYWKSDLTSHQKTH, YECSECGKAFFRKSHLNAHERTH, YECTECRKAFYYKSDLTRHKKTH, FKCEECKKAFSRKSKLAIHQKKH, YECTECKKAFSHQSQLTAHRIAH, and YECKECNKSFHWKCQLTAHQKRH.

This sequence belongs to the krueppel C2H2-type zinc-finger protein family.

It is found in the nucleus. In terms of biological role, transcription factor specifically required to repress retrotransposons in embryonic stem cells. Recognizes and binds retroviral DNA sequences from a large subset of mammalian retroviruses and retroelements and repress their expression by recruiting a repressive complex containing TRIM28/KAP1. The polypeptide is Zinc finger protein 809 (Mus musculus (Mouse)).